Consider the following 102-residue polypeptide: UV-induced protein uvi31 (102 aa).

This sequence belongs to the BolA/IbaG family.

It is found in the mitochondrion matrix. The protein resides in the cytoplasm. It localises to the nucleus. In terms of biological role, acts as a mitochondrial iron-sulfur (Fe-S) cluster assembly factor that facilitates [4Fe-4S] cluster insertion into a subset of mitochondrial proteins such as lipoyl synthase (LS) and succinate dehydrogenase (SDH). Required during the last step of iron-sulfur protein assembly when the iron-sulfur cluster is inserted into the target protein. Probably acts together with the monothiol glutaredoxin grx5. Not required for [2Fe-2S] cluster insertion into mitochondrial proteins. May be involved in control of cell division, especially during the resumption from cell cycle arrest. This chain is UV-induced protein uvi31, found in Schizosaccharomyces pombe (strain 972 / ATCC 24843) (Fission yeast).